A 234-amino-acid chain; its full sequence is MIELWPAIDLIGSTSVRLTEGKYDSEEKMSRSAEESIAYYSQFECVNRIHIVDLIGAKAQHAREFDYIKSLRRLTTKDIEVGGGIRTKSQIMDYFAAGINYCIVGTKGIQDTDWLKEMAHTFPGRIYFSVDAYGEDIKVNGWEEDTELNLFSFVKQLSDIPLGGIIYTHIAKDGKMSGPNFELTGQLVKATTIPVIASGGIRHQQDIQRLASLNVHAAIIGKAAHQASFWEGLK.

Residue D9 is the Proton acceptor of the active site. D131 functions as the Proton donor in the catalytic mechanism.

This sequence belongs to the HisA/HisF family.

Its subcellular location is the cytoplasm. It catalyses the reaction 1-(5-phospho-beta-D-ribosyl)-5-[(5-phospho-beta-D-ribosylamino)methylideneamino]imidazole-4-carboxamide = 5-[(5-phospho-1-deoxy-D-ribulos-1-ylimino)methylamino]-1-(5-phospho-beta-D-ribosyl)imidazole-4-carboxamide. It participates in amino-acid biosynthesis; L-histidine biosynthesis; L-histidine from 5-phospho-alpha-D-ribose 1-diphosphate: step 4/9. The sequence is that of 1-(5-phosphoribosyl)-5-[(5-phosphoribosylamino)methylideneamino] imidazole-4-carboxamide isomerase from Staphylococcus aureus (strain bovine RF122 / ET3-1).